A 937-amino-acid polypeptide reads, in one-letter code: Protein translocase subunit SecA (937 aa).

Residues Gln-90, 108–112 (GEGKT), and Asp-509 contribute to the ATP site.

The protein belongs to the SecA family. In terms of assembly, monomer and homodimer. Part of the essential Sec protein translocation apparatus which comprises SecA, SecYEG and auxiliary proteins SecDF. Other proteins may also be involved.

The protein resides in the cell inner membrane. It is found in the cellular thylakoid membrane. It localises to the cytoplasm. It catalyses the reaction ATP + H2O + cellular proteinSide 1 = ADP + phosphate + cellular proteinSide 2.. Its function is as follows. Part of the Sec protein translocase complex. Interacts with the SecYEG preprotein conducting channel. Has a central role in coupling the hydrolysis of ATP to the transfer of proteins into and across the cell membrane, serving as an ATP-driven molecular motor driving the stepwise translocation of polypeptide chains across the membrane. Functionally, probably participates in protein translocation into and across both the cytoplasmic and thylakoid membranes in cyanobacterial cells. This chain is Protein translocase subunit SecA, found in Synechococcus sp. (strain CC9902).